The primary structure comprises 576 residues: Chaperonin CPN60-2, mitochondrial (576 aa).

Residues 1 to 34 constitute a mitochondrion transit peptide; that stretch reads MYRAAASLASKARQAGSSSAARQVGSRLAWSRNY.

This sequence belongs to the chaperonin (HSP60) family.

The protein localises to the mitochondrion. Its function is as follows. Implicated in mitochondrial protein import and macromolecular assembly. May facilitate the correct folding of imported proteins. May also prevent misfolding and promote the refolding and proper assembly of unfolded polypeptides generated under stress conditions in the mitochondrial matrix. This Zea mays (Maize) protein is Chaperonin CPN60-2, mitochondrial (CPN60II).